We begin with the raw amino-acid sequence, 780 residues long: Protein SEY1 (780 aa).

Residues 1–680 are Cytoplasmic-facing; that stretch reads MDSKEEAIQL…KRSMIKTTTH (680 aa). The GB1/RHD3-type G domain occupies 35–265; the sequence is GVNYHVISVF…NEDYYFKPEY (231 aa). 45-52 provides a ligand contact to GTP; the sequence is GSQSSGKS. A coiled-coil region spans residues 440-463; sequence EVKEEVVKRFENDLKETSDKLRVT. A helical membrane pass occupies residues 681–701; the sequence is IPLWIYAIIVVLGWNEFMMVI. At 702–704 the chain is on the lumenal side; that stretch reads RNP. Residues 705–725 traverse the membrane as a helical segment; that stretch reads LFVTLTILILVSFYFINKFDL. The Cytoplasmic segment spans residues 726–780; sequence WGPVKSVAQTAAGETIGTIKTKLRDFVLEEHEKTPKIQSEKSNSDSEKVVENEKS. Residues 756–780 form a disordered region; that stretch reads HEKTPKIQSEKSNSDSEKVVENEKS.

This sequence belongs to the TRAFAC class dynamin-like GTPase superfamily. GB1/RHD3 GTPase family. RHD3 subfamily.

The protein resides in the endoplasmic reticulum membrane. Functionally, cooperates with the reticulon proteins and tubule-shaping DP1 family proteins to generate and maintain the structure of the tubular endoplasmic reticulum network. Has GTPase activity, which is required for its function in ER organization. The sequence is that of Protein SEY1 from Vanderwaltozyma polyspora (strain ATCC 22028 / DSM 70294 / BCRC 21397 / CBS 2163 / NBRC 10782 / NRRL Y-8283 / UCD 57-17) (Kluyveromyces polysporus).